The primary structure comprises 200 residues: QLCLLQPLGSGGFGSVYKATYHGATVAVKQVKKSSKNRLASRQSFWAELNVAWLQHDNVVRVVAASTCAPASQNSLGTIIMEYVGNITLHHVIYGTGDVWRQGEDDEGGCGRLALSMEETVCYSCDIMTGLAFLHSQGIVHLDLKPANVFITEQGVCKIGDFGCSQKLEEGLSQSLHVCQQGGTYTHRAPELLKGERVTA.

The Protein kinase domain occupies Leu-2–Ala-200. ATP-binding positions include Leu-8 to Val-16 and Lys-29. Asp-143 acts as the Proton acceptor in catalysis.

Belongs to the protein kinase superfamily. Ser/Thr protein kinase family.

It carries out the reaction L-seryl-[protein] + ATP = O-phospho-L-seryl-[protein] + ADP + H(+). The catalysed reaction is L-threonyl-[protein] + ATP = O-phospho-L-threonyl-[protein] + ADP + H(+). The sequence is that of Serine/threonine-protein kinase mos (MOS) from Nycticorax nycticorax (Black-crowned night-heron).